The chain runs to 261 residues: Ribosomal RNA small subunit methyltransferase J (261 aa).

S-adenosyl-L-methionine is bound by residues 111-112 (RD), 127-128 (ER), 163-164 (SS), and D181.

Belongs to the methyltransferase superfamily. RsmJ family.

It is found in the cytoplasm. The catalysed reaction is guanosine(1516) in 16S rRNA + S-adenosyl-L-methionine = N(2)-methylguanosine(1516) in 16S rRNA + S-adenosyl-L-homocysteine + H(+). Specifically methylates the guanosine in position 1516 of 16S rRNA. The sequence is that of Ribosomal RNA small subunit methyltransferase J from Shewanella sp. (strain MR-7).